The primary structure comprises 652 residues: Drebrin (652 aa).

Position 2 is an N-acetylalanine (A2). Positions 5–134 (GFAAHRLELL…DPGAIGQRLS (130 aa)) constitute an ADF-H domain. Composition is skewed to basic and acidic residues over residues 211–236 (MEQE…EEHR) and 288–298 (DNPREFFKQQE). Disordered regions lie at residues 211 to 350 (MEQE…YITC) and 371 to 652 (SAAG…GGGL). A compositionally biased stretch (low complexity) spans 328–340 (SGPPSSSSSSSSP). A compositionally biased stretch (pro residues) spans 507 to 517 (PDTPAGPPVPP). Acidic residues-rich tracts occupy residues 540–554 (QHEE…EEAT) and 640–652 (PLPE…GGGL).

Brain neurons.

The protein localises to the cytoplasm. The protein resides in the cell projection. It is found in the dendrite. Its subcellular location is the cell cortex. It localises to the cell junction. The protein localises to the growth cone. Its function is as follows. Actin cytoskeleton-organizing protein that plays a role in the formation of cell projections. Plays a role in dendritic spine morphogenesis and organization, including the localization of the dopamine receptor DRD1 to the dendritic spines. Involved in synaptic plasticity. This is Drebrin (DBN1) from Gallus gallus (Chicken).